The primary structure comprises 207 residues: MDNEKGLLIVLSGPSGVGKGTVRKRIFEDPSTSYKYSISMTTRQMREGEVDGVDYFFKTRDAFEALIKDDQFIEYAEYVGNYYGTPVQYVKDTMDEGHDVFLEIEVEGAKQVRKKFPDALFIFLAPPSLDHLRERLVGRGTESNEKIQSRINEARKEVEMMNLYDYVVVNDEVELAKNRIQCIVEAEHLKRERVEAKYRKMILEAKK.

The region spanning 6–185 is the Guanylate kinase-like domain; it reads GLLIVLSGPS…AKNRIQCIVE (180 aa). ATP is bound at residue 13-20; it reads GPSGVGKG.

This sequence belongs to the guanylate kinase family.

It is found in the cytoplasm. The catalysed reaction is GMP + ATP = GDP + ADP. In terms of biological role, essential for recycling GMP and indirectly, cGMP. This is Guanylate kinase from Staphylococcus aureus (strain Mu50 / ATCC 700699).